The primary structure comprises 469 residues: Relaxin-3 receptor 1 (469 aa).

Over 1–81 (MQMADAATIA…ESADTEARVR (81 aa)) the chain is Extracellular. N-linked (GlcNAc...) asparagine glycosylation is found at Asn36 and Asn40. The chain crosses the membrane as a helical span at residues 82–102 (ILISVVYWVVCALGLAGNLLV). Residues 103 to 119 (LYLMKSMQGWRKSSINL) are Cytoplasmic-facing. A helical transmembrane segment spans residues 120-140 (FVTNLALTDFQFVLTLPFWAV). Topologically, residues 141–156 (ENALDFKWPFGKAMCK) are extracellular. A disulfide bridge links Cys155 with Cys247. A helical transmembrane segment spans residues 157–177 (IVSMVTSMNMYASVFFLTAMS). Residues 178-215 (VTRYHSVASALKSHRTRGHGRGDCCGRSLGDSCCFSAK) are Cytoplasmic-facing. A helical transmembrane segment spans residues 216 to 236 (ALCVWIWALAALASLPSAIFS). At 237–270 (TTVKVMGEELCLVRFPDKLLGRDRQFWLGLYHSQ) the chain is on the extracellular side. The chain crosses the membrane as a helical span at residues 271 to 291 (KVLLGFVLPLGIIILCYLLLV). Residues 292–329 (RFIADRRAAGTKGGAAVAGGRPTGASARRLSKVTKSVT) are Cytoplasmic-facing. Residues 330 to 350 (IVVLSFFLCWLPNQALTTWSI) form a helical membrane-spanning segment. At 351-356 (LIKFNA) the chain is on the extracellular side. A helical transmembrane segment spans residues 357 to 377 (VPFSQEYFLCQVYAFPVSVCL). Residues 378-469 (AHSNSCLNPV…YDLLPSSSAY (92 aa)) lie on the Cytoplasmic side of the membrane.

This sequence belongs to the G-protein coupled receptor 1 family. In terms of tissue distribution, expressed predominantly in brain regions. Highest expression in substantia nigra and pituitary, followed by hippocampus, spinal cord, amygdala, caudate nucleus and corpus callosum, quite low level in cerebellum. In peripheral tissues, relatively high levels in adrenal glands, low levels in pancreas, salivary gland, placenta, mammary gland and testis.

The protein resides in the cell membrane. Receptor for RNL3/relaxin-3. Binding of the ligand inhibit cAMP accumulation. In Homo sapiens (Human), this protein is Relaxin-3 receptor 1 (RXFP3).